Here is a 464-residue protein sequence, read N- to C-terminus: Probable mannosyltransferase KTR4 (464 aa).

Residues 1-11 (MRFLSKRILKP) lie on the Cytoplasmic side of the membrane. The chain crosses the membrane as a helical; Signal-anchor for type II membrane protein span at residues 12–32 (VLSVIILISIAVTVVLYFLTA). The tract at residues 33–130 (NENYLQAVKD…NLVRSGDPLA (98 aa)) is stem region. Residues 33–464 (NENYLQAVKD…SMSEEELEMY (432 aa)) lie on the Lumenal side of the membrane. The catalytic stretch occupies residues 131–464 (GKAKGTILSL…SMSEEELEMY (334 aa)). Residue Glu-352 is the Nucleophile of the active site.

Belongs to the glycosyltransferase 15 family.

Its subcellular location is the membrane. In terms of biological role, possible glycosyltransferase that transfers an alpha-D-mannosyl residue from GDP-mannose into lipid-linked oligosaccharide, forming an alpha-(1-&gt;2)-D-mannosyl-D-mannose linkage. This Saccharomyces cerevisiae (strain ATCC 204508 / S288c) (Baker's yeast) protein is Probable mannosyltransferase KTR4 (KTR4).